The primary structure comprises 161 residues: Phosphopantetheine adenylyltransferase (161 aa).

Thr10 provides a ligand contact to substrate. Residues 10-11 and His18 contribute to the ATP site; that span reads TF. Residues Lys42, Leu74, and Arg88 each coordinate substrate. Residues 89 to 91, Glu99, and 124 to 130 contribute to the ATP site; these read GLR and NSFISST.

The protein belongs to the bacterial CoaD family. In terms of assembly, homohexamer. Mg(2+) serves as cofactor.

Its subcellular location is the cytoplasm. It carries out the reaction (R)-4'-phosphopantetheine + ATP + H(+) = 3'-dephospho-CoA + diphosphate. The protein operates within cofactor biosynthesis; coenzyme A biosynthesis; CoA from (R)-pantothenate: step 4/5. Its function is as follows. Reversibly transfers an adenylyl group from ATP to 4'-phosphopantetheine, yielding dephospho-CoA (dPCoA) and pyrophosphate. This chain is Phosphopantetheine adenylyltransferase, found in Photobacterium profundum (strain SS9).